We begin with the raw amino-acid sequence, 127 residues long: Large ribosomal subunit protein bL17 (127 aa).

Belongs to the bacterial ribosomal protein bL17 family. In terms of assembly, part of the 50S ribosomal subunit. Contacts protein L32.

The chain is Large ribosomal subunit protein bL17 from Enterococcus faecalis (strain ATCC 700802 / V583).